Consider the following 63-residue polypeptide: Potassium channel toxin alpha-KTx 21.1 (63 aa).

A signal peptide spans 1 to 27; that stretch reads MQFSGVVLILISMTLVNFVFFETKVEA. 3 disulfides stabilise this stretch: cysteine 33-cysteine 53, cysteine 38-cysteine 58, and cysteine 42-cysteine 60.

The protein belongs to the short scorpion toxin superfamily. Potassium channel inhibitor family. Alpha-KTx 21 subfamily. In terms of tissue distribution, expressed by the venom gland.

It is found in the secreted. Its function is as follows. Reversibly and voltage-independently blocks voltage-gated potassium channels rKv1.2/KCNA2 (73%) (IC(50)=196 nM), hKv1.3/KCNA3 (50%) (IC(50)=508 nM), Shaker IR (30%), rKv1.6/KCNA6 (22%) (at 0.5 uM). Interaction of Ts15 with Kv1.3/KCNA3 is stronger than its interaction with Kv1.2/KCNA2. The sequence is that of Potassium channel toxin alpha-KTx 21.1 from Tityus serrulatus (Brazilian scorpion).